Consider the following 127-residue polypeptide: MRCFPINDTRFGRELINSICEFTVCILTCHSLSMKRNRCSKSNFFIPNFPTWLDFLLLGLKASSVPDNRCSTLALYFSFSNWKIALLSLFISLSIRITCFPFFEKNRIFLYNSFFCEVYCSKNSCAS.

The chain crosses the membrane as a helical span at residues 84–103 (IALLSLFISLSIRITCFPFF).

The protein resides in the membrane. This is an uncharacterized protein from Saccharomyces cerevisiae (strain ATCC 204508 / S288c) (Baker's yeast).